Reading from the N-terminus, the 146-residue chain is 3-hydroxyacyl-[acyl-carrier-protein] dehydratase FabZ (146 aa).

Residue histidine 49 is part of the active site.

This sequence belongs to the thioester dehydratase family. FabZ subfamily.

It localises to the cytoplasm. The enzyme catalyses a (3R)-hydroxyacyl-[ACP] = a (2E)-enoyl-[ACP] + H2O. Its function is as follows. Involved in unsaturated fatty acids biosynthesis. Catalyzes the dehydration of short chain beta-hydroxyacyl-ACPs and long chain saturated and unsaturated beta-hydroxyacyl-ACPs. The sequence is that of 3-hydroxyacyl-[acyl-carrier-protein] dehydratase FabZ from Wolbachia sp. subsp. Brugia malayi (strain TRS).